The sequence spans 305 residues: Homoserine O-acetyltransferase (305 aa).

Cys132 (acyl-thioester intermediate) is an active-site residue. Substrate contacts are provided by Lys153 and Ser181. His221 (proton acceptor) is an active-site residue. Residue Glu223 is part of the active site. Residue Arg235 coordinates substrate.

It belongs to the MetA family.

The protein resides in the cytoplasm. The catalysed reaction is L-homoserine + acetyl-CoA = O-acetyl-L-homoserine + CoA. Its pathway is amino-acid biosynthesis; L-methionine biosynthesis via de novo pathway; O-acetyl-L-homoserine from L-homoserine: step 1/1. Functionally, transfers an acetyl group from acetyl-CoA to L-homoserine, forming acetyl-L-homoserine. The protein is Homoserine O-acetyltransferase of Leuconostoc mesenteroides subsp. mesenteroides (strain ATCC 8293 / DSM 20343 / BCRC 11652 / CCM 1803 / JCM 6124 / NCDO 523 / NBRC 100496 / NCIMB 8023 / NCTC 12954 / NRRL B-1118 / 37Y).